Consider the following 320-residue polypeptide: ATP-dependent 6-phosphofructokinase (320 aa).

ATP is bound at residue Gly-12. Residues 22–26 (RGVVR) and 55–60 (RYSVSD) contribute to the ADP site. Residues 73–74 (RF) and 103–106 (GDGS) contribute to the ATP site. Asp-104 is a Mg(2+) binding site. 126-128 (TID) provides a ligand contact to substrate. Catalysis depends on Asp-128, which acts as the Proton acceptor. Residue Arg-155 participates in ADP binding. Residues Arg-163 and 170-172 (MGR) contribute to the substrate site. ADP-binding positions include 186 to 188 (GCE), Lys-212, and 214 to 216 (KKH). Residues Glu-223, Arg-244, and 250-253 (HIQR) each bind substrate.

This sequence belongs to the phosphofructokinase type A (PFKA) family. ATP-dependent PFK group I subfamily. Prokaryotic clade 'B1' sub-subfamily. In terms of assembly, homotetramer. Mg(2+) is required as a cofactor.

It localises to the cytoplasm. The enzyme catalyses beta-D-fructose 6-phosphate + ATP = beta-D-fructose 1,6-bisphosphate + ADP + H(+). Its pathway is carbohydrate degradation; glycolysis; D-glyceraldehyde 3-phosphate and glycerone phosphate from D-glucose: step 3/4. With respect to regulation, allosterically activated by ADP and other diphosphonucleosides, and allosterically inhibited by phosphoenolpyruvate. Functionally, catalyzes the phosphorylation of D-fructose 6-phosphate to fructose 1,6-bisphosphate by ATP, the first committing step of glycolysis. The protein is ATP-dependent 6-phosphofructokinase of Serratia proteamaculans (strain 568).